A 200-amino-acid polypeptide reads, in one-letter code: MFSPCTVKEKRSTLRSVAPNPESSVIPPIPLPSRRYKTRHIDALCSLMHLCLLRKDYPRASRAFSLLLRSKSVDISKLWNIGLEILNKVNPEASSEYMERLIARYPARPSINNSYPNRNAEHFFPAYIMLLIQRQEYNKAMKLLDEYLLLPPYNQNPALHEYSGMLCFELAKEEASESERTKWIEKAKYNFSNAGIDVEL.

It localises to the nucleus. Functionally, subunit of a multiprotein complex essential for the initiation of rDNA transcription by RNA polymerase I. Binding to the DNA template is dependent on the initial binding of other factors. The protein is RNA polymerase I-specific transcription initiation factor rrn11 (rrn11) of Schizosaccharomyces pombe (strain 972 / ATCC 24843) (Fission yeast).